We begin with the raw amino-acid sequence, 221 residues long: Phosphoribosylformylglycinamidine synthase subunit PurQ (221 aa).

One can recognise a Glutamine amidotransferase type-1 domain in the interval 8–221 (NVGIIRFPGT…GLKFFKSFLD (214 aa)). Residue cysteine 91 is the Nucleophile of the active site. Catalysis depends on residues histidine 198 and glutamate 200.

In terms of assembly, part of the FGAM synthase complex composed of 1 PurL, 1 PurQ and 2 PurS subunits.

It localises to the cytoplasm. It catalyses the reaction N(2)-formyl-N(1)-(5-phospho-beta-D-ribosyl)glycinamide + L-glutamine + ATP + H2O = 2-formamido-N(1)-(5-O-phospho-beta-D-ribosyl)acetamidine + L-glutamate + ADP + phosphate + H(+). It carries out the reaction L-glutamine + H2O = L-glutamate + NH4(+). It participates in purine metabolism; IMP biosynthesis via de novo pathway; 5-amino-1-(5-phospho-D-ribosyl)imidazole from N(2)-formyl-N(1)-(5-phospho-D-ribosyl)glycinamide: step 1/2. Its function is as follows. Part of the phosphoribosylformylglycinamidine synthase complex involved in the purines biosynthetic pathway. Catalyzes the ATP-dependent conversion of formylglycinamide ribonucleotide (FGAR) and glutamine to yield formylglycinamidine ribonucleotide (FGAM) and glutamate. The FGAM synthase complex is composed of three subunits. PurQ produces an ammonia molecule by converting glutamine to glutamate. PurL transfers the ammonia molecule to FGAR to form FGAM in an ATP-dependent manner. PurS interacts with PurQ and PurL and is thought to assist in the transfer of the ammonia molecule from PurQ to PurL. The chain is Phosphoribosylformylglycinamidine synthase subunit PurQ from Methanosphaera stadtmanae (strain ATCC 43021 / DSM 3091 / JCM 11832 / MCB-3).